We begin with the raw amino-acid sequence, 76 residues long: Omega-conotoxin-like TxO5 (76 aa).

Positions 1-22 (MKLTCMMIVAVLFLTAWTFVTA) are cleaved as a signal peptide. The propeptide occupies 23–48 (ITSNGLENLFPKAHHEMKNPEASKLN). 3 disulfides stabilise this stretch: Cys-51–Cys-66, Cys-58–Cys-70, and Cys-65–Cys-75.

It belongs to the conotoxin O1 superfamily. In terms of tissue distribution, expressed by the venom duct.

Its subcellular location is the secreted. In terms of biological role, omega-conotoxins act at presynaptic membranes, they bind and block voltage-gated calcium channels (Cav). The polypeptide is Omega-conotoxin-like TxO5 (Conus textile (Cloth-of-gold cone)).